A 342-amino-acid polypeptide reads, in one-letter code: uncharacterized protein (342 aa).

The protein belongs to the cycloisomerase 2 family.

This is an uncharacterized protein from Staphylococcus aureus (strain N315).